We begin with the raw amino-acid sequence, 218 residues long: Regulator of G-protein signaling 20 (218 aa).

Positions 1 to 10 (MGSERTEMRK) are enriched in basic and acidic residues. The interval 1-26 (MGSERTEMRKRQMAATQETPGTAQAQ) is disordered. Residues 14–26 (AATQETPGTAQAQ) show a composition bias toward polar residues. The region spanning 92–208 (SFDKLMLTPA…MNSAIYKDLL (117 aa)) is the RGS domain.

As to quaternary structure, forms a complex with G(alpha)z/i2 subunits and mu-opioid receptors; the formation of this complex results in mu-opioid receptor desensitization. Interacts with OPRM1. Fatty acylated. Heavily palmitoylated in the cysteine string motif. In terms of processing, N- and O-glycosylated in synapsomal membranes. Post-translationally, sumoylated by SUMO1 and SUM02 in synaptosomes. The sumoylated forms act as a scaffold for sequestering mu-opioid receptor-activated G(alpha) subunits.

It localises to the membrane. The protein resides in the nucleus. Its subcellular location is the cytoplasm. Functionally, inhibits signal transduction by increasing the GTPase activity of G protein alpha subunits thereby driving them into their inactive GDP-bound form. Binds selectively to G(z)-alpha and G(alpha)-i2 subunits, accelerates their GTPase activity and regulates their signaling activities. The G(z)-alpha activity is inhibited by the phosphorylation and palmitoylation of the G-protein. Negatively regulates mu-opioid receptor-mediated activation of the G-proteins. The protein is Regulator of G-protein signaling 20 (RGS20) of Gallus gallus (Chicken).